Reading from the N-terminus, the 613-residue chain is Portal protein (613 aa).

Residues 577-613 (ATGGDHGIRQAPSARGDTEPDHAKSKPARDPPPGAGS) form a disordered region. Residues 592–605 (GDTEPDHAKSKPAR) show a composition bias toward basic and acidic residues.

The protein belongs to the herpesviridae portal protein family. In terms of assembly, homododecamerizes. Interacts with terminase subunits TRM1 and TRM3.

The protein localises to the virion. The protein resides in the host nucleus. It localises to the host cytoplasm. In terms of biological role, forms a portal in the viral capsid through which viral DNA is translocated during DNA packaging. Assembles as a dodecamer at a single fivefold axe of the T=16 icosahedric capsid. Binds to the molecular motor that translocates the viral DNA, termed terminase. This Epstein-Barr virus (strain B95-8) (HHV-4) protein is Portal protein.